The sequence spans 154 residues: NADPH-dependent 7-cyano-7-deazaguanine reductase (154 aa).

Positions 1-11 are enriched in basic and acidic residues; sequence MAKKPVKDLKQ. Residues 1–31 are disordered; it reads MAKKPVKDLKQLGHATPVPASPEEATLERVP. Catalysis depends on Cys-52, which acts as the Thioimide intermediate. The active-site Proton donor is Asp-59. Residues 74 to 76 and 93 to 94 contribute to the substrate site; these read IES and HE.

This sequence belongs to the GTP cyclohydrolase I family. QueF type 1 subfamily.

It is found in the cytoplasm. The enzyme catalyses 7-aminomethyl-7-carbaguanine + 2 NADP(+) = 7-cyano-7-deazaguanine + 2 NADPH + 3 H(+). The protein operates within tRNA modification; tRNA-queuosine biosynthesis. In terms of biological role, catalyzes the NADPH-dependent reduction of 7-cyano-7-deazaguanine (preQ0) to 7-aminomethyl-7-deazaguanine (preQ1). This chain is NADPH-dependent 7-cyano-7-deazaguanine reductase, found in Parvibaculum lavamentivorans (strain DS-1 / DSM 13023 / NCIMB 13966).